The primary structure comprises 398 residues: tRNA-specific 2-thiouridylase MnmA (398 aa).

Residues 33–40 (GMSGGVDS) and M59 contribute to the ATP site. Residues 119–121 (NPD) form an interaction with target base in tRNA region. C124 serves as the catalytic Nucleophile. C124 and C226 are joined by a disulfide. G148 is an ATP binding site. The interaction with tRNA stretch occupies residues 176 to 178 (KDQ). C226 acts as the Cysteine persulfide intermediate in catalysis. The interval 343-344 (RY) is interaction with tRNA.

The protein belongs to the MnmA/TRMU family.

Its subcellular location is the cytoplasm. The enzyme catalyses S-sulfanyl-L-cysteinyl-[protein] + uridine(34) in tRNA + AH2 + ATP = 2-thiouridine(34) in tRNA + L-cysteinyl-[protein] + A + AMP + diphosphate + H(+). Functionally, catalyzes the 2-thiolation of uridine at the wobble position (U34) of tRNA, leading to the formation of s(2)U34. In Psychrobacter sp. (strain PRwf-1), this protein is tRNA-specific 2-thiouridylase MnmA.